The following is a 463-amino-acid chain: Cysteine--tRNA ligase (463 aa).

Cys-28 is a Zn(2+) binding site. Residues 30–40 (ITIYDLCHIGH) carry the 'HIGH' region motif. 3 residues coordinate Zn(2+): Cys-209, His-234, and Glu-238. Positions 266–270 (KMSKS) match the 'KMSKS' region motif. Residue Lys-269 participates in ATP binding.

Belongs to the class-I aminoacyl-tRNA synthetase family. In terms of assembly, monomer. Zn(2+) is required as a cofactor.

It localises to the cytoplasm. It catalyses the reaction tRNA(Cys) + L-cysteine + ATP = L-cysteinyl-tRNA(Cys) + AMP + diphosphate. The sequence is that of Cysteine--tRNA ligase from Proteus mirabilis (strain HI4320).